Here is a 2137-residue protein sequence, read N- to C-terminus: Pecanex-like protein 2 (2137 aa).

Helical transmembrane passes span 34–54 (CHLY…LAFP) and 57–77 (AIIV…IKLV). Disordered stretches follow at residues 92–163 (QQKP…LELS), 225–251 (NGKG…VDKG), 402–530 (EKTS…HARV), and 545–572 (SAEI…QMPN). Positions 96–114 (SRKEEKPNKDKEAKGEHIT) are enriched in basic and acidic residues. A compositionally biased stretch (polar residues) spans 116–125 (HRNPSNNRQI). The N-linked (GlcNAc...) asparagine glycan is linked to Asn136. Residues 146–156 (SRGQSITSHHS) are compositionally biased toward polar residues. An N-linked (GlcNAc...) asparagine glycan is attached at Asn449. Over residues 479 to 490 (IKDHSSSSREPW) the composition is skewed to basic and acidic residues. Polar residues predominate over residues 510–520 (GQTNLDPSSCK). Residues Asn550, Asn572, Asn587, Asn598, and Asn613 are each glycosylated (N-linked (GlcNAc...) asparagine). The span at 593–602 (ASSQLNGSAE) shows a compositional bias: polar residues. The segment at 593–612 (ASSQLNGSAEQNEESGLLRD) is disordered. Disordered regions lie at residues 621 to 655 (EILE…CTQP) and 740 to 763 (AREM…SGDP). The span at 630–655 (GHSSKQGKPDLQSQDHTSTGPACTQP) shows a compositional bias: polar residues. The span at 746 to 760 (SSSSTTTSESQDPSS) shows a compositional bias: low complexity. Transmembrane regions (helical) follow at residues 844–864 (LAIL…SQGF), 868–888 (MWVL…LKSV), 901–921 (QIIT…ILLL), 952–972 (YLIV…FPQI), 983–1003 (IDML…VYSV), 1029–1049 (HIPA…YHLS), 1099–1119 (LIVC…TVFL), 1124–1144 (FLSI…HYVL), 1193–1213 (YILY…LISN), 1237–1257 (SFCN…FFHF), 1265–1285 (SFLL…DLLH), 1302–1322 (GSSF…MLFF), and 1324–1344 (TIAT…VIFI). Asn1412, Asn1553, and Asn1818 each carry an N-linked (GlcNAc...) asparagine glycan. Positions 1876–1958 (RQHSGGNIED…RPPMLSSSGP (83 aa)) are disordered. Composition is skewed to polar residues over residues 1901–1910 (SGGSQESSAE), 1920–1929 (GVSSCEGTQR), and 1937–1958 (SQSV…SSGP). Asn2054 carries N-linked (GlcNAc...) asparagine glycosylation.

The protein belongs to the pecanex family.

The protein resides in the membrane. In terms of biological role, may play a role in tumorigenesis of colorectal carcinomas with high microsatellite instability (MSI-H). The chain is Pecanex-like protein 2 from Homo sapiens (Human).